Consider the following 450-residue polypeptide: Phosphoglucosamine mutase (450 aa).

Residue serine 102 is the Phosphoserine intermediate of the active site. Mg(2+) contacts are provided by serine 102, aspartate 243, aspartate 245, and aspartate 247. Phosphoserine is present on serine 102.

This sequence belongs to the phosphohexose mutase family. Mg(2+) serves as cofactor. In terms of processing, activated by phosphorylation.

It catalyses the reaction alpha-D-glucosamine 1-phosphate = D-glucosamine 6-phosphate. Functionally, catalyzes the conversion of glucosamine-6-phosphate to glucosamine-1-phosphate. This Rhizobium etli (strain CIAT 652) protein is Phosphoglucosamine mutase.